Consider the following 99-residue polypeptide: Acylphosphatase-1 (99 aa).

Residues 9–99 (SVDYEVFGKV…LEHSTFSICK (91 aa)) form the Acylphosphatase-like domain. Catalysis depends on residues R24 and N42.

This sequence belongs to the acylphosphatase family.

It carries out the reaction an acyl phosphate + H2O = a carboxylate + phosphate + H(+). The polypeptide is Acylphosphatase-1 (acyp1) (Xenopus laevis (African clawed frog)).